Reading from the N-terminus, the 172-residue chain is ATP-dependent kinase-like protein notR' (172 aa).

Belongs to the YFH7 family.

Its function is as follows. ATP-dependent kinase-like protein; part of the gene cluster that mediates the biosynthesis of notoamide, a fungal indole alkaloid that belongs to a family of natural products containing a characteristic bicyclo[2.2.2]diazaoctane core. The first step of notoamide biosynthesis involves coupling of L-proline and L-tryptophan by the bimodular NRPS notE', to produce cyclo-L-tryptophan-L-proline called brevianamide F. The reverse prenyltransferase notF' then acts as a deoxybrevianamide E synthase and converts brevianamide F to deoxybrevianamide E via reverse prenylation at C-2 of the indole ring leading to the bicyclo[2.2.2]diazaoctane core. Deoxybrevianamide E is further hydroxylated at C-6 of the indole ring, likely catalyzed by the cytochrome P450 monooxygenase notG', to yield 6-hydroxy-deoxybrevianamide E. 6-hydroxy-deoxybrevianamide E is a specific substrate of the prenyltransferase notC' for normal prenylation at C-7 to produce 6-hydroxy-7-prenyl-deoxybrevianamide, also called notoamide S. As the proposed pivotal branching point in notoamide biosynthesis, notoamide S can be diverted to notoamide E through an oxidative pyran ring closure putatively catalyzed by either notH' cytochrome P450 monooxygenase or the notD' FAD-linked oxidoreductase. This step would be followed by an indole 2,3-epoxidation-initiated pinacol-like rearrangement catalyzed by the notB' FAD-dependent monooxygenase leading to the formation of notoamide C and notoamide D. On the other hand notoamide S is converted to notoamide T by notH' (or notD'), a bifunctional oxidase that also functions as the intramolecular Diels-Alderase responsible for generation of (-)-notoamide T. To generate antipodal (+)-notoaminide T, notH (or notD) in Aspergillus strain MF297-2 is expected to catalyze a Diels-Alder reaction leading to the opposite stereochemistry. The remaining oxidoreductase notD' (or notH') likely catalyzes the oxidative pyran ring formation to yield (-)-stephacidin A. The FAD-dependent monooxygenase notI' is highly similar to notB' and is predicted to catalyze a similar conversion from (-)-stephacidin A to (+)-notoamide B via the 2,3-epoxidation of (-)-stephacidin A followed by a pinacol-type rearrangement. Finally, it remains unclear which enzyme could be responsible for the final hydroxylation steps leading to notoamide A and sclerotiamide. The function of notQ' in the notoamide biosynthesis has not been determined yet. This chain is ATP-dependent kinase-like protein notR', found in Aspergillus versicolor.